Here is a 218-residue protein sequence, read N- to C-terminus: N-(5'-phosphoribosyl)anthranilate isomerase (218 aa).

The protein belongs to the TrpF family.

The enzyme catalyses N-(5-phospho-beta-D-ribosyl)anthranilate = 1-(2-carboxyphenylamino)-1-deoxy-D-ribulose 5-phosphate. Its pathway is amino-acid biosynthesis; L-tryptophan biosynthesis; L-tryptophan from chorismate: step 3/5. The polypeptide is N-(5'-phosphoribosyl)anthranilate isomerase (Lachnoclostridium phytofermentans (strain ATCC 700394 / DSM 18823 / ISDg) (Clostridium phytofermentans)).